The sequence spans 55 residues: Large ribosomal subunit protein bL33 (55 aa).

It belongs to the bacterial ribosomal protein bL33 family.

The polypeptide is Large ribosomal subunit protein bL33 (Vibrio atlanticus (strain LGP32) (Vibrio splendidus (strain Mel32))).